A 410-amino-acid chain; its full sequence is Serine hydroxymethyltransferase (410 aa).

(6S)-5,6,7,8-tetrahydrofolate contacts are provided by residues Leu119 and Gly123–Leu125. Lys228 carries the post-translational modification N6-(pyridoxal phosphate)lysine. Ser351–Phe353 lines the (6S)-5,6,7,8-tetrahydrofolate pocket.

The protein belongs to the SHMT family. As to quaternary structure, homodimer. Pyridoxal 5'-phosphate is required as a cofactor.

It is found in the cytoplasm. The catalysed reaction is (6R)-5,10-methylene-5,6,7,8-tetrahydrofolate + glycine + H2O = (6S)-5,6,7,8-tetrahydrofolate + L-serine. The protein operates within one-carbon metabolism; tetrahydrofolate interconversion. Its pathway is amino-acid biosynthesis; glycine biosynthesis; glycine from L-serine: step 1/1. Catalyzes the reversible interconversion of serine and glycine with tetrahydrofolate (THF) serving as the one-carbon carrier. This reaction serves as the major source of one-carbon groups required for the biosynthesis of purines, thymidylate, methionine, and other important biomolecules. Also exhibits THF-independent aldolase activity toward beta-hydroxyamino acids, producing glycine and aldehydes, via a retro-aldol mechanism. The chain is Serine hydroxymethyltransferase from Clostridium perfringens (strain 13 / Type A).